We begin with the raw amino-acid sequence, 436 residues long: Anaerobic glycerol-3-phosphate dehydrogenase subunit B (436 aa).

Belongs to the anaerobic G-3-P dehydrogenase subunit B family. Composed of a catalytic GlpA/B dimer and of membrane bound GlpC. It depends on FMN as a cofactor.

It carries out the reaction a quinone + sn-glycerol 3-phosphate = dihydroxyacetone phosphate + a quinol. The protein operates within polyol metabolism; glycerol degradation via glycerol kinase pathway; glycerone phosphate from sn-glycerol 3-phosphate (anaerobic route): step 1/1. Its function is as follows. Conversion of glycerol 3-phosphate to dihydroxyacetone. Uses fumarate or nitrate as electron acceptor. In Vibrio cholerae serotype O1 (strain ATCC 39541 / Classical Ogawa 395 / O395), this protein is Anaerobic glycerol-3-phosphate dehydrogenase subunit B.